A 185-amino-acid polypeptide reads, in one-letter code: UPF0669 protein C6orf120 homolog (185 aa).

An N-terminal signal peptide occupies residues 1–23 (MAARWRRILIVFVAAQVLCLVNT). Asn47 is a glycosylation site (N-linked (GlcNAc...) asparagine).

It belongs to the UPF0669 family.

It is found in the secreted. The protein is UPF0669 protein C6orf120 homolog of Gallus gallus (Chicken).